The sequence spans 284 residues: MLQNEVENFANLLEQATVYLAPYQEKIIVVKYGGNAMINEDLKKLVMQDILLLNQLGVKVVLVHGGGPEISQGVKLLGKEPQFINGLRVTDQDTINVVLQMLAGKVNKSLVALLKGKGVGLCGIDANMLQCEKLQAEVDYGFVGEIVKVNTQLLELALSANLIPVISTVGVDDQGVAYNINADTVASEIAMALGAAKLVSMTDIAGLLRDRFDESTLIPEVEVSEVQGLIDQGIIAGGMIPKIACCTDFINAGGIEANIIDGRVPHAILVSLFGGKNGTLFYKK.

Substrate contacts are provided by residues 66 to 67, Arg-88, and Asn-179; that span reads GG.

It belongs to the acetylglutamate kinase family. ArgB subfamily.

It localises to the cytoplasm. The enzyme catalyses N-acetyl-L-glutamate + ATP = N-acetyl-L-glutamyl 5-phosphate + ADP. It functions in the pathway amino-acid biosynthesis; L-arginine biosynthesis; N(2)-acetyl-L-ornithine from L-glutamate: step 2/4. Its function is as follows. Catalyzes the ATP-dependent phosphorylation of N-acetyl-L-glutamate. In Actinobacillus pleuropneumoniae serotype 7 (strain AP76), this protein is Acetylglutamate kinase.